The sequence spans 473 residues: 3-isopropylmalate dehydratase large subunit (473 aa).

[4Fe-4S] cluster-binding residues include Cys-348, Cys-408, and Cys-411. The interval 421 to 440 is disordered; that stretch reads GDEASASSSNRNFIGRQGSK.

The protein belongs to the aconitase/IPM isomerase family. LeuC type 1 subfamily. In terms of assembly, heterodimer of LeuC and LeuD. Requires [4Fe-4S] cluster as cofactor.

It carries out the reaction (2R,3S)-3-isopropylmalate = (2S)-2-isopropylmalate. It functions in the pathway amino-acid biosynthesis; L-leucine biosynthesis; L-leucine from 3-methyl-2-oxobutanoate: step 2/4. Functionally, catalyzes the isomerization between 2-isopropylmalate and 3-isopropylmalate, via the formation of 2-isopropylmaleate. This Haloferax volcanii (strain ATCC 29605 / DSM 3757 / JCM 8879 / NBRC 14742 / NCIMB 2012 / VKM B-1768 / DS2) (Halobacterium volcanii) protein is 3-isopropylmalate dehydratase large subunit.